The sequence spans 546 residues: Cysteine--tRNA ligase (546 aa).

A Zn(2+)-binding site is contributed by Cys57. Residues 59 to 69 carry the 'HIGH' region motif; the sequence is ATVQSSPHIGH. The tract at residues 211-236 is disordered; sequence PSVDATGADKYNPVDPADASPDKHDP. Residues Cys270, His295, and Glu299 each contribute to the Zn(2+) site. The 'KMSKS' region signature appears at 326-330; it reads KMSKS. Lys329 contributes to the ATP binding site.

It belongs to the class-I aminoacyl-tRNA synthetase family. Monomer. Zn(2+) is required as a cofactor.

The protein resides in the cytoplasm. It catalyses the reaction tRNA(Cys) + L-cysteine + ATP = L-cysteinyl-tRNA(Cys) + AMP + diphosphate. The sequence is that of Cysteine--tRNA ligase from Bifidobacterium longum (strain NCC 2705).